The sequence spans 259 residues: Phosphatidylglycerol--prolipoprotein diacylglyceryl transferase (259 aa).

The next 4 membrane-spanning stretches (helical) occupy residues 9–29, 55–75, 92–112, and 117–137; these read IIFS…VVGI, FITY…VLLY, EGGM…YLFC, and INFL…LFLG. A 1,2-diacyl-sn-glycero-3-phospho-(1'-sn-glycerol) is bound at residue Arg-138. Transmembrane regions (helical) follow at residues 172 to 192, 201 to 221, and 228 to 248; these read QLYE…YAVF, GLNS…IEMF, and IGFI…MLLL.

Belongs to the Lgt family.

Its subcellular location is the cell inner membrane. The catalysed reaction is L-cysteinyl-[prolipoprotein] + a 1,2-diacyl-sn-glycero-3-phospho-(1'-sn-glycerol) = an S-1,2-diacyl-sn-glyceryl-L-cysteinyl-[prolipoprotein] + sn-glycerol 1-phosphate + H(+). The protein operates within protein modification; lipoprotein biosynthesis (diacylglyceryl transfer). Its function is as follows. Catalyzes the transfer of the diacylglyceryl group from phosphatidylglycerol to the sulfhydryl group of the N-terminal cysteine of a prolipoprotein, the first step in the formation of mature lipoproteins. This chain is Phosphatidylglycerol--prolipoprotein diacylglyceryl transferase, found in Rickettsia typhi (strain ATCC VR-144 / Wilmington).